The primary structure comprises 797 residues: Peroxisome proliferator-activated receptor gamma coactivator 1-alpha (797 aa).

Position 77 is an N6-acetyllysine (Lys77). A disordered region spans residues 101–138 (EDGLPSFDALTDGAVTTDNEASPSSMPDGTPPPQEAEE). Positions 114-127 (AVTTDNEASPSSMP) are enriched in polar residues. An LXXLL motif motif is present at residues 142 to 146 (LKKLL). At Lys144 the chain carries N6-acetyllysine. Thr177 carries the post-translational modification Phosphothreonine; by AMPK. N6-acetyllysine is present on Lys183. The interval 212-276 (YLTTNDDPPH…NDPKGSPFEN (65 aa)) is disordered. Over residues 218–236 (DPPHTKPTENRNSSRDKCA) the composition is skewed to basic and acidic residues. The segment covering 243–259 (TQPQSQHAQAKPTTLSL) has biased composition (polar residues). 8 positions are modified to N6-acetyllysine: Lys253, Lys270, Lys277, Lys320, Lys346, Lys412, Lys441, and Lys450. The tract at residues 289–376 (GTAGLTPPTT…HEERKTKRPS (88 aa)) is disordered. The interaction with PPARG stretch occupies residues 292 to 338 (GLTPPTTPPHKANQDNPFKASPKLKPSCKTVVPPPTKRARYSECSGT). Positions 349 to 797 (EQSELYAQLS…LKEAQRSLRR (449 aa)) are mediates interaction with RNF34. Residue Ser538 is modified to Phosphoserine; by AMPK. Disordered regions lie at residues 543–598 (NSPC…SSRS), 612–634 (HRNSPLYVRSRSRSPYSRRPRYD), and 648–668 (EYRKEHEKRESERAKQRERQK). Positions 562 to 577 (QRMRSRSRSFSRHRSC) are enriched in basic residues. Residues 578-598 (SRSPYSRSRSRSPGSRSSSRS) are compositionally biased toward low complexity. Basic residues predominate over residues 621–630 (SRSRSPYSRR). One can recognise an RRM domain in the interval 676 to 752 (RVIYVGKIRP…TDFELYFCGR (77 aa)). N6-acetyllysine occurs at positions 757 and 778.

As to quaternary structure, homooligomer. Interacts with MYBBP1A; inhibits MYBBP1A transcriptional activation. Interacts with PRDM16, LPIN1 and PML. Interacts (via LXXLL motif) with RORA and RORC (via AF-2 motif); activates RORA and RORC transcriptional activation. Interacts with LRPPRC. Interacts with FOXO1. Interacts with NR5A2. Phosphorylation by AMPK in skeletal muscle increases activation of its own promoter. Phosphorylated by CLK2. In terms of processing, heavily acetylated by KAT2A/GCN5 under conditions of high nutrients, leading to inactivation of PPARGC1A. Deacetylated by SIRT1 in low nutrients/high NAD conditions, leading to its activation. Post-translationally, ubiquitinated. Ubiquitination by RNF34 induces proteasomal degradation. In terms of tissue distribution, white quadriceps and red tibialis anterior (TA) muscles, liver, kidney and brown adipose tissue (at protein level). Skeletal muscle, brown adipose tissue, heart, kidney and brain.

It is found in the nucleus. The protein localises to the PML body. In terms of biological role, transcriptional coactivator for steroid receptors and nuclear receptors. Greatly increases the transcriptional activity of PPARG and thyroid hormone receptor on the uncoupling protein promoter. Can regulate key mitochondrial genes that contribute to the program of adaptive thermogenesis. Plays an essential role in metabolic reprogramming in response to dietary availability through coordination of the expression of a wide array of genes involved in glucose and fatty acid metabolism. Acts as a key regulator of gluconeogenesis: stimulates hepatic gluconeogenesis by increasing the expression of gluconeogenic enzymes, and acting together with FOXO1 to promote the fasting gluconeogenic program. Induces the expression of PERM1 in the skeletal muscle in an ESRRA-dependent manner. Also involved in the integration of the circadian rhythms and energy metabolism. Required for oscillatory expression of clock genes, such as BMAL1 and NR1D1, through the coactivation of RORA and RORC, and metabolic genes, such as PDK4 and PEPCK. This is Peroxisome proliferator-activated receptor gamma coactivator 1-alpha (Ppargc1a) from Mus musculus (Mouse).